The primary structure comprises 56 residues: Calsequestrin-1 (56 aa).

A Phosphotyrosine modification is found at tyrosine 9. Residue serine 47 is modified to Phosphoserine.

This sequence belongs to the calsequestrin family. In terms of assembly, monomer; increases in response to a depletion of intracellular calcium. Homodimer. Homotetramer and homopolymer. Can form linear homooligomers. Ca(2+) ions promote oligomerization. Interacts (via C-terminal end and preferentially with the monomeric form) with STIM1; this interaction increases in response to a depletion of intracellular calcium, decreases both STIM1 aggregation and clustering, interaction of STIM1 with ORAI1 and store-operated Ca(2+) entry (SOCE) activity. Interacts with ASPH and TRDN. In terms of processing, N-glycosylated.

The protein resides in the endoplasmic reticulum. The protein localises to the sarcoplasmic reticulum. Its subcellular location is the sarcoplasmic reticulum lumen. It localises to the sarcoplasmic reticulum membrane. It is found in the mitochondrion matrix. Calsequestrin is a high-capacity, moderate affinity, calcium-binding protein and thus acts as an internal calcium store in muscle. Calcium ions are bound by clusters of acidic residues at the protein surface, often at the interface between subunits. Can bind around 80 Ca(2+) ions. Regulates the release of lumenal Ca(2+) via the calcium release channel RYR1; this plays an important role in triggering muscle contraction. Negatively regulates store-operated Ca(2+) entry (SOCE) activity. This chain is Calsequestrin-1 (CASQ1), found in Canis lupus familiaris (Dog).